A 419-amino-acid polypeptide reads, in one-letter code: Glucose-1-phosphate adenylyltransferase (419 aa).

Alpha-D-glucose 1-phosphate contacts are provided by residues Tyr-106, Gly-171, 186–187, and Ser-204; that span reads EK.

Belongs to the bacterial/plant glucose-1-phosphate adenylyltransferase family. In terms of assembly, homotetramer.

It catalyses the reaction alpha-D-glucose 1-phosphate + ATP + H(+) = ADP-alpha-D-glucose + diphosphate. It participates in glycan biosynthesis; glycogen biosynthesis. Functionally, involved in the biosynthesis of ADP-glucose, a building block required for the elongation reactions to produce glycogen. Catalyzes the reaction between ATP and alpha-D-glucose 1-phosphate (G1P) to produce pyrophosphate and ADP-Glc. The sequence is that of Glucose-1-phosphate adenylyltransferase from Roseobacter denitrificans (strain ATCC 33942 / OCh 114) (Erythrobacter sp. (strain OCh 114)).